The sequence spans 319 residues: Acetyl-coenzyme A carboxylase carboxyl transferase subunit alpha (319 aa).

Positions 35 to 296 constitute a CoA carboxyltransferase C-terminal domain; that stretch reads NLDEEVQRLR…KAQLLADLAD (262 aa).

This sequence belongs to the AccA family. Acetyl-CoA carboxylase is a heterohexamer composed of biotin carboxyl carrier protein (AccB), biotin carboxylase (AccC) and two subunits each of ACCase subunit alpha (AccA) and ACCase subunit beta (AccD).

It is found in the cytoplasm. The catalysed reaction is N(6)-carboxybiotinyl-L-lysyl-[protein] + acetyl-CoA = N(6)-biotinyl-L-lysyl-[protein] + malonyl-CoA. Its pathway is lipid metabolism; malonyl-CoA biosynthesis; malonyl-CoA from acetyl-CoA: step 1/1. Its function is as follows. Component of the acetyl coenzyme A carboxylase (ACC) complex. First, biotin carboxylase catalyzes the carboxylation of biotin on its carrier protein (BCCP) and then the CO(2) group is transferred by the carboxyltransferase to acetyl-CoA to form malonyl-CoA. This Erwinia tasmaniensis (strain DSM 17950 / CFBP 7177 / CIP 109463 / NCPPB 4357 / Et1/99) protein is Acetyl-coenzyme A carboxylase carboxyl transferase subunit alpha.